We begin with the raw amino-acid sequence, 107 residues long: Small ribosomal subunit protein uS10c (107 aa).

The protein belongs to the universal ribosomal protein uS10 family. Part of the 30S ribosomal subunit.

The protein resides in the plastid. The protein localises to the chloroplast. Involved in the binding of tRNA to the ribosomes. This is Small ribosomal subunit protein uS10c from Thalassiosira pseudonana (Marine diatom).